A 473-amino-acid polypeptide reads, in one-letter code: Argininosuccinate lyase (473 aa).

It belongs to the lyase 1 family. Argininosuccinate lyase subfamily.

Its subcellular location is the cytoplasm. The enzyme catalyses 2-(N(omega)-L-arginino)succinate = fumarate + L-arginine. It functions in the pathway amino-acid biosynthesis; L-arginine biosynthesis; L-arginine from L-ornithine and carbamoyl phosphate: step 3/3. In Streptomyces clavuligerus, this protein is Argininosuccinate lyase.